A 400-amino-acid polypeptide reads, in one-letter code: MQELGKAETNSTRIIRQDDKRVTIEKDLDTEHMVLSMGPQHPSTHGVLRLECITDGEVVVEAEPYLGYLHRCFEKHCEKIDYPAIVPYTDRMDYLAGMNNELAYCITVEKLLDIEIPRRVEFIRVIVAELNRIASHLVAIGTYAIDLGAFTPFLFCFRDREHIMSLLEWISGARMLYNYIWIGGLAYDVPADFKTRVAEFVTYFRPKAKELYQLLTENEIFVKRTYDIGIMPADVAINYGWSGPMLRGSGVKWDLRRNDPYSVYPELDFDVPVPDGKFSVVGDCLSRHLVRALEMEESLKIIEQCLDKMPEEPNFNSRALIPKKIRPKAGEVYGRAENPRGELGYYIVSDGKSTSPVRCKARSSCFVNLSAMKDLSKGQLIPDLVAIIGSIDIVLGEVDR.

This sequence belongs to the complex I 49 kDa subunit family. As to quaternary structure, NDH-1 is composed of 14 different subunits. Subunits NuoB, C, D, E, F, and G constitute the peripheral sector of the complex.

The protein resides in the cell inner membrane. The catalysed reaction is a quinone + NADH + 5 H(+)(in) = a quinol + NAD(+) + 4 H(+)(out). NDH-1 shuttles electrons from NADH, via FMN and iron-sulfur (Fe-S) centers, to quinones in the respiratory chain. The immediate electron acceptor for the enzyme in this species is believed to be a menaquinone. Couples the redox reaction to proton translocation (for every two electrons transferred, four hydrogen ions are translocated across the cytoplasmic membrane), and thus conserves the redox energy in a proton gradient. The polypeptide is NADH-quinone oxidoreductase subunit D (Chlorobaculum tepidum (strain ATCC 49652 / DSM 12025 / NBRC 103806 / TLS) (Chlorobium tepidum)).